Consider the following 1435-residue polypeptide: Putative ATP-dependent RNA helicase YLR419W (1435 aa).

Disordered regions lie at residues 1-57 (MAKK…STAS) and 226-251 (LSSH…KNSH). Phosphoserine is present on S9. Residues 31-43 (KGQEPEPEDDKRA) show a composition bias toward basic and acidic residues. Positions 45-57 (QQSNRAKVTSTAS) are enriched in polar residues. Residues 365-406 (PLSTRMIVERLTEIGVSSDEALLALQQNDMNENEAAGFLTRE) enclose the UBA domain. In terms of domain architecture, RWD spans 430-531 (QELESLESIY…EWLKENISKI (102 aa)). Positions 543 to 566 (DSKGAINKRNISNGKRSINNSSSR) are disordered. Polar residues predominate over residues 551-566 (RNISNGKRSINNSSSR). One can recognise a Helicase ATP-binding domain in the interval 614-782 (IDIINKNEVV…FPGLATCHIE (169 aa)). 627 to 634 (GETGSGKS) is an ATP binding site. The DEAH box signature appears at 729-732 (DEVH). S816 is subject to Phosphoserine. In terms of domain architecture, Helicase C-terminal spans 845–1020 (LLCQVVEYVH…SLYLSVKAMG (176 aa)).

This sequence belongs to the DEAD box helicase family. DEAH subfamily.

It is found in the cytoplasm. The enzyme catalyses ATP + H2O = ADP + phosphate + H(+). Its function is as follows. Probable ATP-binding RNA helicase. This chain is Putative ATP-dependent RNA helicase YLR419W, found in Saccharomyces cerevisiae (strain ATCC 204508 / S288c) (Baker's yeast).